A 359-amino-acid polypeptide reads, in one-letter code: Probable RNA methyltransferase RPD_2859 (359 aa).

Catalysis depends on E99, which acts as the Proton acceptor. The Radical SAM core domain maps to 105 to 330 (RFDGHTACIS…PVVVRDTQGR (226 aa)). A disulfide bridge connects residues C112 and C336. The [4Fe-4S] cluster site is built by C119, C123, and C126. S-adenosyl-L-methionine is bound by residues 162-163 (GE), S194, 217-219 (SLH), and N293. The S-methylcysteine intermediate role is filled by C336.

It belongs to the radical SAM superfamily. RlmN family. [4Fe-4S] cluster is required as a cofactor.

It is found in the cytoplasm. The chain is Probable RNA methyltransferase RPD_2859 from Rhodopseudomonas palustris (strain BisB5).